A 601-amino-acid chain; its full sequence is ATP-dependent lipid A-core flippase (601 aa).

5 helical membrane passes run Cys33–Ile53, Val72–Tyr92, Val158–Val178, Leu255–Val275, and Thr283–Ile303. The 282-residue stretch at Val34 to Arg315 folds into the ABC transmembrane type-1 domain. Residues Ile347 to Met583 enclose the ABC transporter domain. Gly381 to Thr388 contributes to the ATP binding site.

The protein belongs to the ABC transporter superfamily. Lipid exporter (TC 3.A.1.106) family. As to quaternary structure, homodimer.

Its subcellular location is the cell inner membrane. The catalysed reaction is ATP + H2O + lipid A-core oligosaccharideSide 1 = ADP + phosphate + lipid A-core oligosaccharideSide 2.. In terms of biological role, involved in lipopolysaccharide (LPS) biosynthesis. Translocates lipid A-core from the inner to the outer leaflet of the inner membrane. Transmembrane domains (TMD) form a pore in the inner membrane and the ATP-binding domain (NBD) is responsible for energy generation. The sequence is that of ATP-dependent lipid A-core flippase from Methylococcus capsulatus (strain ATCC 33009 / NCIMB 11132 / Bath).